Reading from the N-terminus, the 501-residue chain is MNRRQVLTGLAALPLLQAKPDPAAADRSSSIDFDPWMVRKLARELASKPYEAPDSSLPASLNDLSYDAYRSLRFRPERALWRAENLPFQVQFFHRGFLYKNRVTIFEVADGKARHVPYRADDFSFGDVAPPPDSDLGFAGFRIHAPLQRADYYDEVSAFLGAAYFRAVTKGERYGLSARGLSIDTGQSSGEEFPLFKTFWLERPAPGASSMVVHALLDSKSVAGAYRFTIRPGDTTVFDVEMALYPRVDLQHAGLAPMTSMFLFGPNDPADTPDFRAAVHDSDGLAIFNGSGEELWRPLCNPKDLQISSFGDRNPRGFGLMQRERSFANYQDLESRYELRPSLWAEPIGDWTDGAVKLIEIPTREEVHDNIASFWEPKQPLRAKGEHIYTYRLHWGPDTPKPKGLARFVRTGVSARGDNDRLFVLDLAGDRLKTVDAAAVRGVVTADKGEIRNIVTQPNPAMGGWRLSFDLAQARAPVELRAVVCEGDAAVSEVWLYRWTP.

Residues 1 to 25 (MNRRQVLTGLAALPLLQAKPDPAAA) form the signal peptide.

This sequence belongs to the OpgD/OpgG family.

The protein resides in the periplasm. The protein operates within glycan metabolism; osmoregulated periplasmic glucan (OPG) biosynthesis. Functionally, involved in the biosynthesis of osmoregulated periplasmic glucans (OPGs). This Rhodopseudomonas palustris (strain ATCC BAA-98 / CGA009) protein is Glucans biosynthesis protein G.